The following is a 244-amino-acid chain: tRNA pseudouridine synthase A (244 aa).

The active-site Nucleophile is Asp52. Residue Tyr111 coordinates substrate.

The protein belongs to the tRNA pseudouridine synthase TruA family. In terms of assembly, homodimer.

The enzyme catalyses uridine(38/39/40) in tRNA = pseudouridine(38/39/40) in tRNA. Its function is as follows. Formation of pseudouridine at positions 38, 39 and 40 in the anticodon stem and loop of transfer RNAs. This Thermosipho melanesiensis (strain DSM 12029 / CIP 104789 / BI429) protein is tRNA pseudouridine synthase A.